The following is a 320-amino-acid chain: Na(+)-translocating NADH-quinone reductase subunit C (320 aa).

Residues W16–I36 form a helical membrane-spanning segment. FMN phosphoryl threonine is present on T285.

It belongs to the NqrC family. In terms of assembly, composed of six subunits; NqrA, NqrB, NqrC, NqrD, NqrE and NqrF. It depends on FMN as a cofactor.

The protein localises to the cell inner membrane. It catalyses the reaction a ubiquinone + n Na(+)(in) + NADH + H(+) = a ubiquinol + n Na(+)(out) + NAD(+). In terms of biological role, NQR complex catalyzes the reduction of ubiquinone-1 to ubiquinol by two successive reactions, coupled with the transport of Na(+) ions from the cytoplasm to the periplasm. NqrA to NqrE are probably involved in the second step, the conversion of ubisemiquinone to ubiquinol. In Chlamydia pneumoniae (Chlamydophila pneumoniae), this protein is Na(+)-translocating NADH-quinone reductase subunit C.